The chain runs to 168 residues: Translationally-controlled tumor protein homolog (168 aa).

Residues 1–168 form the TCTP domain; that stretch reads MLLYKDVISG…FKDGLVSEKF (168 aa). Position 78 is a phosphoserine (Ser-78).

It belongs to the TCTP family.

Its subcellular location is the cytoplasm. Its function is as follows. Involved in calcium binding and microtubule stabilization. May be a guanine nucleotide-free chaperone (GFC). This Schizosaccharomyces pombe (strain 972 / ATCC 24843) (Fission yeast) protein is Translationally-controlled tumor protein homolog (p23fy).